Reading from the N-terminus, the 171-residue chain is 3-hydroxydecanoyl-[acyl-carrier-protein] dehydratase (171 aa).

Residue His71 is part of the active site.

This sequence belongs to the thioester dehydratase family. FabA subfamily. In terms of assembly, homodimer.

It localises to the cytoplasm. The enzyme catalyses a (3R)-hydroxyacyl-[ACP] = a (2E)-enoyl-[ACP] + H2O. It carries out the reaction (3R)-hydroxydecanoyl-[ACP] = (2E)-decenoyl-[ACP] + H2O. It catalyses the reaction (2E)-decenoyl-[ACP] = (3Z)-decenoyl-[ACP]. It participates in lipid metabolism; fatty acid biosynthesis. Its function is as follows. Necessary for the introduction of cis unsaturation into fatty acids. Catalyzes the dehydration of (3R)-3-hydroxydecanoyl-ACP to E-(2)-decenoyl-ACP and then its isomerization to Z-(3)-decenoyl-ACP. Can catalyze the dehydratase reaction for beta-hydroxyacyl-ACPs with saturated chain lengths up to 16:0, being most active on intermediate chain length. The protein is 3-hydroxydecanoyl-[acyl-carrier-protein] dehydratase of Hamiltonella defensa subsp. Acyrthosiphon pisum (strain 5AT).